The sequence spans 279 residues: 4-diphosphocytidyl-2-C-methyl-D-erythritol kinase (279 aa).

Residue K10 is part of the active site. Residue 91–101 coordinates ATP; the sequence is PVASGIGGGSA. Residue D130 is part of the active site.

It belongs to the GHMP kinase family. IspE subfamily.

The catalysed reaction is 4-CDP-2-C-methyl-D-erythritol + ATP = 4-CDP-2-C-methyl-D-erythritol 2-phosphate + ADP + H(+). It participates in isoprenoid biosynthesis; isopentenyl diphosphate biosynthesis via DXP pathway; isopentenyl diphosphate from 1-deoxy-D-xylulose 5-phosphate: step 3/6. Its function is as follows. Catalyzes the phosphorylation of the position 2 hydroxy group of 4-diphosphocytidyl-2C-methyl-D-erythritol. The protein is 4-diphosphocytidyl-2-C-methyl-D-erythritol kinase of Ruegeria pomeroyi (strain ATCC 700808 / DSM 15171 / DSS-3) (Silicibacter pomeroyi).